Here is a 138-residue protein sequence, read N- to C-terminus: MPYERLIYLADTDAAGVVYFAHLLSICHEAYEFSLAQFGINIKDFFKDSPVALPITQAEIQFFRPLFCGDRIQIDFTVRSLSENEFQLQYKIYLAEIMVAKAKTRHVCIAPTARKRIPLPESLKHWLGYLSTLEETGI.

Residue D13 is part of the active site.

It belongs to the 4-hydroxybenzoyl-CoA thioesterase family. DHNA-CoA hydrolase subfamily.

It carries out the reaction 1,4-dihydroxy-2-naphthoyl-CoA + H2O = 1,4-dihydroxy-2-naphthoate + CoA + H(+). Its pathway is cofactor biosynthesis; phylloquinone biosynthesis. The protein operates within quinol/quinone metabolism; 1,4-dihydroxy-2-naphthoate biosynthesis; 1,4-dihydroxy-2-naphthoate from chorismate: step 7/7. In terms of biological role, catalyzes the hydrolysis of 1,4-dihydroxy-2-naphthoyl-CoA (DHNA-CoA) to 1,4-dihydroxy-2-naphthoate (DHNA), a reaction involved in phylloquinone (vitamin K1) biosynthesis. This Microcystis aeruginosa (strain NIES-843 / IAM M-2473) protein is 1,4-dihydroxy-2-naphthoyl-CoA hydrolase.